Reading from the N-terminus, the 138-residue chain is D-ribose pyranase (138 aa).

Catalysis depends on histidine 20, which acts as the Proton donor. Substrate is bound by residues aspartate 28, histidine 105, and 127 to 129 (YAN).

The protein belongs to the RbsD / FucU family. RbsD subfamily. As to quaternary structure, homodecamer.

It is found in the cytoplasm. It carries out the reaction beta-D-ribopyranose = beta-D-ribofuranose. The protein operates within carbohydrate metabolism; D-ribose degradation; D-ribose 5-phosphate from beta-D-ribopyranose: step 1/2. Functionally, catalyzes the interconversion of beta-pyran and beta-furan forms of D-ribose. This chain is D-ribose pyranase, found in Psychromonas ingrahamii (strain DSM 17664 / CCUG 51855 / 37).